The sequence spans 125 residues: Large ribosomal subunit protein bL12 (125 aa).

The protein belongs to the bacterial ribosomal protein bL12 family. In terms of assembly, homodimer. Part of the ribosomal stalk of the 50S ribosomal subunit. Forms a multimeric L10(L12)X complex, where L10 forms an elongated spine to which 2 to 4 L12 dimers bind in a sequential fashion. Binds GTP-bound translation factors.

In terms of biological role, forms part of the ribosomal stalk which helps the ribosome interact with GTP-bound translation factors. Is thus essential for accurate translation. This Syntrophomonas wolfei subsp. wolfei (strain DSM 2245B / Goettingen) protein is Large ribosomal subunit protein bL12.